A 505-amino-acid chain; its full sequence is Forkhead box protein O4 (505 aa).

3 disordered regions span residues 1–66 (MDPE…HSEP), 175–244 (SSWW…SPCP), and 257–276 (RPRSSSNASTVSTRLSPMRP). T32 carries the phosphothreonine; by PKB/AKT1 modification. The segment at 97 to 215 (RRNAWGNQSY…RGRSKGPKKK (119 aa)) is required for interaction with FOXK1. Residues 100-188 (AWGNQSYAEL…MLNPDGGKGG (89 aa)) constitute a DNA-binding region (fork-head). Phosphoserine; by PKB/AKT1 is present on S197. Basic residues predominate over residues 205–216 (LRGRSKGPKKKP). Polar residues predominate over residues 257 to 271 (RPRSSSNASTVSTRL). S262 is modified (phosphoserine; by PKB/AKT1).

As to quaternary structure, interacts with CREBBP/CBP, MYOCD, SIRT1, SRF and YWHAZ. Acetylated by CREBBP/CBP and deacetylated by SIRT1. Binding of YWHAZ inhibits DNA-binding. Interacts with USP7; the interaction is enhanced in presence of hydrogen peroxide and occurs independently of TP53. Interacts with NLK, and this inhibits monoubiquitination and transcriptional activity. Interacts with FOXK1; the interaction inhibits MEF2C transactivation activity. Acetylation by CREBBP/CBP is induced by oxidative stress and inhibits transcriptional activity. Deacetylation by SIRT1 is NAD-dependent and stimulates transcriptional activity. Post-translationally, phosphorylation by PKB/AKT1 inhibits transcriptional activity and is responsible for cytoplasmic localization. May be phosphorylated at multiple sites by NLK. In terms of processing, monoubiquitinated; monoubiquitination is induced by oxidative stress and reduced by deacetylase inhibitors; results in its relocalization to the nucleus and its increased transcriptional activity. Deubiquitinated by USP7; deubiquitination is induced by oxidative stress; enhances its interaction with USP7 and consequently, deubiquitination; increases its translocation to the cytoplasm and inhibits its transcriptional activity. Hydrogene-peroxide-induced ubiquitination and USP7-mediated deubiquitination have no major effect on its protein stability. As to expression, strongly expressed in brown adipose tissue and weakly in white adipose tissue (at protein level). Expressed in skeletal muscle.

It is found in the cytoplasm. The protein resides in the nucleus. Functionally, transcription factor involved in the regulation of the insulin signaling pathway. Binds to insulin-response elements (IREs) and can activate transcription of IGFBP1. Down-regulates expression of HIF1A and suppresses hypoxia-induced transcriptional activation of HIF1A-modulated genes. Also involved in negative regulation of the cell cycle. Involved in increased proteasome activity in embryonic stem cells (ESCs) by activating expression of PSMD11 in ESCs, leading to enhanced assembly of the 26S proteasome, followed by higher proteasome activity. Represses smooth muscle cell differentiation by inhibiting the transcriptional coactivator activity of myocardin. The polypeptide is Forkhead box protein O4 (Foxo4) (Mus musculus (Mouse)).